The sequence spans 448 residues: Methylenetetrahydrofolate--tRNA-(uracil-5-)-methyltransferase TrmFO (448 aa).

An FAD-binding site is contributed by 13-18 (GAGLAG).

This sequence belongs to the MnmG family. TrmFO subfamily. FAD serves as cofactor.

Its subcellular location is the cytoplasm. It carries out the reaction uridine(54) in tRNA + (6R)-5,10-methylene-5,6,7,8-tetrahydrofolate + NADH + H(+) = 5-methyluridine(54) in tRNA + (6S)-5,6,7,8-tetrahydrofolate + NAD(+). It catalyses the reaction uridine(54) in tRNA + (6R)-5,10-methylene-5,6,7,8-tetrahydrofolate + NADPH + H(+) = 5-methyluridine(54) in tRNA + (6S)-5,6,7,8-tetrahydrofolate + NADP(+). Functionally, catalyzes the folate-dependent formation of 5-methyl-uridine at position 54 (M-5-U54) in all tRNAs. The sequence is that of Methylenetetrahydrofolate--tRNA-(uracil-5-)-methyltransferase TrmFO from Streptococcus pyogenes serotype M3 (strain ATCC BAA-595 / MGAS315).